A 260-amino-acid chain; its full sequence is 4-hydroxy-tetrahydrodipicolinate reductase (260 aa).

Residues 8 to 13, glutamate 35, 91 to 93, and 115 to 118 contribute to the NAD(+) site; these read GAAGRM, GTT, and APNM. The Proton donor/acceptor role is filled by histidine 148. (S)-2,3,4,5-tetrahydrodipicolinate is bound at residue histidine 149. Catalysis depends on lysine 152, which acts as the Proton donor. (S)-2,3,4,5-tetrahydrodipicolinate is bound at residue 158 to 159; sequence GT.

The protein belongs to the DapB family.

The protein localises to the cytoplasm. The enzyme catalyses (S)-2,3,4,5-tetrahydrodipicolinate + NAD(+) + H2O = (2S,4S)-4-hydroxy-2,3,4,5-tetrahydrodipicolinate + NADH + H(+). The catalysed reaction is (S)-2,3,4,5-tetrahydrodipicolinate + NADP(+) + H2O = (2S,4S)-4-hydroxy-2,3,4,5-tetrahydrodipicolinate + NADPH + H(+). Its pathway is amino-acid biosynthesis; L-lysine biosynthesis via DAP pathway; (S)-tetrahydrodipicolinate from L-aspartate: step 4/4. Functionally, catalyzes the conversion of 4-hydroxy-tetrahydrodipicolinate (HTPA) to tetrahydrodipicolinate. This chain is 4-hydroxy-tetrahydrodipicolinate reductase, found in Rubrobacter xylanophilus (strain DSM 9941 / JCM 11954 / NBRC 16129 / PRD-1).